The primary structure comprises 312 residues: Olfactory receptor 6C70 (312 aa).

The Extracellular portion of the chain corresponds to 1–22; the sequence is MKNHTRQIEFILLGLTDNSQLQ. An N-linked (GlcNAc...) asparagine glycan is attached at asparagine 3. The helical transmembrane segment at 23–43 threads the bilayer; that stretch reads IVIFLFLLLNCVLSMIGNFTI. Over 44 to 63 the chain is Cytoplasmic; sequence IALILLDSQLKTPMYFFLRN. Residues 64–84 traverse the membrane as a helical segment; that stretch reads FSFLEISFTTACIPRFLITIV. Residues 85-95 lie on the Extracellular side of the membrane; the sequence is TREKTISCNGC. A disulfide bridge links cysteine 95 with cysteine 177. A helical transmembrane segment spans residues 96–116; that stretch reads ISQLFFYIFLGVTEFFLLAAL. The Cytoplasmic portion of the chain corresponds to 117-141; it reads SYDRYVAICKPLRYMSIMSNKVCYQ. The helical transmembrane segment at 142–162 threads the bilayer; sequence LVFSSWVTGFLIIFTPLILGL. Residues 163-194 are Extracellular-facing; it reads NLDFCASNIIDHFICDISLILQLSCSDTHLLE. Residues 195–215 traverse the membrane as a helical segment; sequence LIAFLLAVMTLIVTLFLVILS. Residues 216–237 lie on the Cytoplasmic side of the membrane; the sequence is YSYIIKTILKFPSAQQKKKAFS. A helical transmembrane segment spans residues 238–258; that stretch reads TCSSHMIVVSITYGSCMFIYI. At 259 to 272 the chain is on the extracellular side; sequence KPSANERVALSKGV. A helical membrane pass occupies residues 273-290; it reads TVLNTSVAPLLNPFIYTL. Topologically, residues 291-312 are cytoplasmic; the sequence is RNQQVKQAFKAVFRKIFSASDK.

It belongs to the G-protein coupled receptor 1 family.

It is found in the cell membrane. In terms of biological role, odorant receptor. This Homo sapiens (Human) protein is Olfactory receptor 6C70 (OR6C70).